Consider the following 587-residue polypeptide: Leucine-rich repeat-containing protein 63 (587 aa).

7 LRR repeats span residues 251–274, 344–367, 368–390, 392–413, 414–436, 437–459, and 487–510; these read QSVIETLVTENGNIESVPKQIPPR, AFQLIYLNLSFNDLHYFPTEILCL, KNLQILKLRNNPIKEIPSEIQQL, FLRIFTIAFNLITVLPIGLFSL, SYLEELDVSYNELTFIPNEIQKL, RSLEKLTVDGNELSFFPHGILKL, and LTQIISLFIVQNKLHKFYDKIPVE.

The chain is Leucine-rich repeat-containing protein 63 (LRRC63) from Homo sapiens (Human).